A 209-amino-acid polypeptide reads, in one-letter code: Superoxide dismutase [Mn/Fe] (209 aa).

Histidine 38, histidine 90, aspartate 172, and histidine 176 together coordinate Fe(3+). Residues histidine 38, histidine 90, aspartate 172, and histidine 176 each coordinate Mn(2+).

It belongs to the iron/manganese superoxide dismutase family. The cofactor is Mn(2+). Fe(3+) serves as cofactor.

The catalysed reaction is 2 superoxide + 2 H(+) = H2O2 + O2. Functionally, destroys superoxide anion radicals which are normally produced within the cells and which are toxic to biological systems. Catalyzes the dismutation of superoxide anion radicals into O2 and H2O2 by successive reduction and oxidation of the transition metal ion at the active site. This is Superoxide dismutase [Mn/Fe] (sodB) from Rickettsia typhi (strain ATCC VR-144 / Wilmington).